Consider the following 280-residue polypeptide: NAD kinase (280 aa).

Asp-67 acts as the Proton acceptor in catalysis. NAD(+) contacts are provided by residues 67 to 68 (DG), Arg-72, 138 to 139 (ND), Asp-167, Ala-175, 178 to 183 (TAYSLS), and Gln-237.

The protein belongs to the NAD kinase family. Requires a divalent metal cation as cofactor.

The protein localises to the cytoplasm. The catalysed reaction is NAD(+) + ATP = ADP + NADP(+) + H(+). Its function is as follows. Involved in the regulation of the intracellular balance of NAD and NADP, and is a key enzyme in the biosynthesis of NADP. Catalyzes specifically the phosphorylation on 2'-hydroxyl of the adenosine moiety of NAD to yield NADP. This Aeropyrum pernix (strain ATCC 700893 / DSM 11879 / JCM 9820 / NBRC 100138 / K1) protein is NAD kinase.